The sequence spans 305 residues: Axin interactor, dorsalization-associated protein B (305 aa).

Residues 126 to 137 (ENLEVEEEEEDG) show a composition bias toward acidic residues. The segment at 126 to 146 (ENLEVEEEEEDGGAGAGSPDL) is disordered. Residues 153–220 (GTLLPRLPSE…RKEDTYVHFN (68 aa)) are axin-binding. A C2 Aida-type domain is found at 156–303 (LPRLPSEPGM…LYLHLLQTLL (148 aa)).

Belongs to the AIDA family.

Its function is as follows. Acts as a ventralizing factor during embryogenesis. Inhibits axin-mediated JNK activation by binding axin and disrupting axin homodimerization. This in turn antagonizes a Wnt/beta-catenin-independent dorsalization pathway activated by axin/JNK-signaling. The chain is Axin interactor, dorsalization-associated protein B (aida-b) from Xenopus laevis (African clawed frog).